The sequence spans 269 residues: 5'-nucleotidase SurE (269 aa).

The a divalent metal cation site is built by Asp11, Asp12, Ser43, and Asn101.

It belongs to the SurE nucleotidase family. Requires a divalent metal cation as cofactor.

The protein resides in the cytoplasm. The enzyme catalyses a ribonucleoside 5'-phosphate + H2O = a ribonucleoside + phosphate. Nucleotidase that shows phosphatase activity on nucleoside 5'-monophosphates. The sequence is that of 5'-nucleotidase SurE from Prochlorococcus marinus (strain MIT 9313).